The primary structure comprises 466 residues: Cysteine--tRNA ligase (466 aa).

Residue C33 participates in Zn(2+) binding. The 'HIGH' region signature appears at 35 to 45 (PTVYDYAHIGN). 3 residues coordinate Zn(2+): C221, H246, and E250. The short motif at 279 to 283 (KMSKS) is the 'KMSKS' region element. K282 contributes to the ATP binding site.

This sequence belongs to the class-I aminoacyl-tRNA synthetase family. In terms of assembly, monomer. The cofactor is Zn(2+).

It is found in the cytoplasm. The enzyme catalyses tRNA(Cys) + L-cysteine + ATP = L-cysteinyl-tRNA(Cys) + AMP + diphosphate. In Rhizobium meliloti (strain 1021) (Ensifer meliloti), this protein is Cysteine--tRNA ligase.